Reading from the N-terminus, the 478-residue chain is MNPPSGPRVPPSPTQEPSCMATPAPPSWWDSSQSSISSLGRLPSISPTAPGTWAAAWVPLPTVDVPDHAHYTLGTVILLVGLTGMLGNLTVIYTFCRSRSLRTPANMFIINLAVSDFLMSFTQAPVFFTSSLYKQWLFGETGCEFYAFCGALFGISSMITLTAIALDRYLVITRPLATFGVASKRRAAFVLLGVWLYALAWSLPPFFGWSAYVPEGLLTSCSWDYMSFTPAVRAYTMLLCCFVFFLPLLIIIYCYIFIFRAIRETGRALQTFGACKGNGESLWQRQRLQSECKMAKIMLLVILLFVLSWAPYSAVALVAFAGYAHVLTPYMSSVPAVIAKASAIHNPIIYAITHPKYRVAIAQHLPCLGVLLGVSRRHSRPYPSYRSTHRSTLTSHTSNLSWISIRRRQESLGSESEVGWTHMEAAAVWGAAQQANGRSLYGQGLEDLEAKAPPRPQGHEAETPGKTKGLIPSQDPRM.

Residues 1 to 14 (MNPPSGPRVPPSPT) show a composition bias toward pro residues. Residues 1–32 (MNPPSGPRVPPSPTQEPSCMATPAPPSWWDSS) form a disordered region. The Extracellular segment spans residues 1–72 (MNPPSGPRVP…VDVPDHAHYT (72 aa)). Residues 73–93 (LGTVILLVGLTGMLGNLTVIY) form a helical membrane-spanning segment. Topologically, residues 94 to 107 (TFCRSRSLRTPANM) are cytoplasmic. Residues 108–128 (FIINLAVSDFLMSFTQAPVFF) traverse the membrane as a helical segment. Over 129–144 (TSSLYKQWLFGETGCE) the chain is Extracellular. Cys-143 and Cys-221 are joined by a disulfide. The helical transmembrane segment at 145-165 (FYAFCGALFGISSMITLTAIA) threads the bilayer. Topologically, residues 166–188 (LDRYLVITRPLATFGVASKRRAA) are cytoplasmic. Residues 189 to 209 (FVLLGVWLYALAWSLPPFFGW) form a helical membrane-spanning segment. Residues 210–238 (SAYVPEGLLTSCSWDYMSFTPAVRAYTML) are Extracellular-facing. A helical transmembrane segment spans residues 239 to 259 (LCCFVFFLPLLIIIYCYIFIF). Over 260–296 (RAIRETGRALQTFGACKGNGESLWQRQRLQSECKMAK) the chain is Cytoplasmic. Residues 297–317 (IMLLVILLFVLSWAPYSAVAL) traverse the membrane as a helical segment. Over 318 to 332 (VAFAGYAHVLTPYMS) the chain is Extracellular. The chain crosses the membrane as a helical span at residues 333-353 (SVPAVIAKASAIHNPIIYAIT). Lys-340 is modified (N6-(retinylidene)lysine). The Cytoplasmic portion of the chain corresponds to 354 to 478 (HPKYRVAIAQ…GLIPSQDPRM (125 aa)). Positions 440–478 (LYGQGLEDLEAKAPPRPQGHEAETPGKTKGLIPSQDPRM) are disordered. Over residues 448–465 (LEAKAPPRPQGHEAETPG) the composition is skewed to basic and acidic residues.

This sequence belongs to the G-protein coupled receptor 1 family. Opsin subfamily. As to expression, expressed in the retina.

Its subcellular location is the cell membrane. It is found in the cell projection. The protein resides in the axon. The protein localises to the dendrite. It localises to the perikaryon. In terms of biological role, photoreceptor that binds cis-retinaldehydes. Contributes to pupillar reflex, photoentrainment and other non-image forming responses to light. May be involved in the optokinetic visual tracking response. May be involved in the regulation of retinal hyaloid vessel growth and regression. In Homo sapiens (Human), this protein is Melanopsin (OPN4).